Consider the following 525-residue polypeptide: Phospho-2-dehydro-3-deoxyheptonate aldolase 1, chloroplastic (525 aa).

The span at Met-1–Ser-13 shows a compositional bias: polar residues. The segment at Met-1–Ala-35 is disordered. Residues Met-1–Ala-52 constitute a chloroplast transit peptide.

This sequence belongs to the class-II DAHP synthase family.

It localises to the plastid. The protein resides in the chloroplast. The catalysed reaction is D-erythrose 4-phosphate + phosphoenolpyruvate + H2O = 7-phospho-2-dehydro-3-deoxy-D-arabino-heptonate + phosphate. It participates in metabolic intermediate biosynthesis; chorismate biosynthesis; chorismate from D-erythrose 4-phosphate and phosphoenolpyruvate: step 1/7. In Arabidopsis thaliana (Mouse-ear cress), this protein is Phospho-2-dehydro-3-deoxyheptonate aldolase 1, chloroplastic (DHS1).